Here is a 247-residue protein sequence, read N- to C-terminus: Malonyl-[acyl-carrier protein] O-methyltransferase (247 aa).

This sequence belongs to the methyltransferase superfamily.

The enzyme catalyses malonyl-[ACP] + S-adenosyl-L-methionine = malonyl-[ACP] methyl ester + S-adenosyl-L-homocysteine. Its pathway is cofactor biosynthesis; biotin biosynthesis. Functionally, converts the free carboxyl group of a malonyl-thioester to its methyl ester by transfer of a methyl group from S-adenosyl-L-methionine (SAM). It allows to synthesize pimeloyl-ACP via the fatty acid synthetic pathway. The sequence is that of Malonyl-[acyl-carrier protein] O-methyltransferase from Buchnera aphidicola subsp. Baizongia pistaciae (strain Bp).